The primary structure comprises 371 residues: tRNA-specific 2-thiouridylase MnmA (371 aa).

ATP-binding positions include 13-20 and methionine 39; that span reads GMSGGVDS. The segment at 99–101 is interaction with target base in tRNA; it reads NPD. Cysteine 104 (nucleophile) is an active-site residue. A disulfide bridge links cysteine 104 with cysteine 200. Glycine 128 is an ATP binding site. The interaction with tRNA stretch occupies residues 150–152; that stretch reads KDQ. Cysteine 200 (cysteine persulfide intermediate) is an active-site residue. Positions 308 to 309 are interaction with tRNA; sequence RY.

The protein belongs to the MnmA/TRMU family.

The protein resides in the cytoplasm. The catalysed reaction is S-sulfanyl-L-cysteinyl-[protein] + uridine(34) in tRNA + AH2 + ATP = 2-thiouridine(34) in tRNA + L-cysteinyl-[protein] + A + AMP + diphosphate + H(+). Catalyzes the 2-thiolation of uridine at the wobble position (U34) of tRNA, leading to the formation of s(2)U34. The sequence is that of tRNA-specific 2-thiouridylase MnmA from Bacillus cereus (strain ATCC 10987 / NRS 248).